A 300-amino-acid polypeptide reads, in one-letter code: ETS homologous factor (300 aa).

Residues 29–115 form the PNT domain; sequence STCNVSSGFF…SNLQHLKWNG (87 aa). Positions 183 to 202 are disordered; sequence ESPDMKKEQDPPAKCHTKKH. The span at 185-195 shows a compositional bias: basic and acidic residues; sequence PDMKKEQDPPA. A DNA-binding region (ETS) is located at residues 207 to 289; it reads THLWEFIRDI…DGRRLVYKFG (83 aa).

The protein belongs to the ETS family. Expressed exclusively in tissues with a high content of epithelial cells. Highly expressed in salivary gland, mammary gland, prostate, and lung. Weakly expressed in kidney and colon. Not detected in heart, brain, placenta, liver, skeletal muscle, spleen, thymus, testis, ovary, small intestine or peripheral blood leukocytes.

It is found in the nucleus. Its function is as follows. Transcriptional activator that may play a role in regulating epithelial cell differentiation and proliferation. May act as a repressor for a specific subset of ETS/AP-1-responsive genes and as a modulator of the nuclear response to mitogen-activated protein kinase signaling cascades. Binds to DNA sequences containing the consensus nucleotide core sequence GGAA. Involved in regulation of TNFRSF10B/DR5 expression through Ets-binding sequences on the TNFRSF10B/DR5 promoter. May contribute to development and carcinogenesis by acting as a tumor suppressor gene or anti-oncogene. The sequence is that of ETS homologous factor from Homo sapiens (Human).